The chain runs to 544 residues: Protein anon-37Cs (544 aa).

The protein resides in the cytoplasm. In terms of biological role, has a non-vital function. The chain is Protein anon-37Cs (anon-37Cs) from Drosophila lebanonensis (Fruit fly).